The primary structure comprises 339 residues: Glycerol-3-phosphate dehydrogenase [NAD(P)+] (339 aa).

Ser-13, Trp-14, and Lys-108 together coordinate NADPH. The sn-glycerol 3-phosphate site is built by Lys-108, Gly-139, and Ser-141. Ala-143 lines the NADPH pocket. Residues Lys-194, Asp-247, Ser-257, Arg-258, and Asn-259 each coordinate sn-glycerol 3-phosphate. Residue Lys-194 is the Proton acceptor of the active site. Arg-258 provides a ligand contact to NADPH. NADPH is bound by residues Val-282 and Glu-284.

It belongs to the NAD-dependent glycerol-3-phosphate dehydrogenase family.

Its subcellular location is the cytoplasm. It carries out the reaction sn-glycerol 3-phosphate + NAD(+) = dihydroxyacetone phosphate + NADH + H(+). The catalysed reaction is sn-glycerol 3-phosphate + NADP(+) = dihydroxyacetone phosphate + NADPH + H(+). It functions in the pathway membrane lipid metabolism; glycerophospholipid metabolism. Functionally, catalyzes the reduction of the glycolytic intermediate dihydroxyacetone phosphate (DHAP) to sn-glycerol 3-phosphate (G3P), the key precursor for phospholipid synthesis. The protein is Glycerol-3-phosphate dehydrogenase [NAD(P)+] of Streptococcus equi subsp. zooepidemicus (strain H70).